Reading from the N-terminus, the 45-residue chain is Large ribosomal subunit protein bL34c (45 aa).

Positions 1-10 (MSKGFSNGTN) are enriched in polar residues. The interval 1–45 (MSKGFSNGTNIKRVRKSGFRARMSNSSGRKILNSRRRKQRKKIAL) is disordered. The segment covering 32 to 45 (LNSRRRKQRKKIAL) has biased composition (basic residues).

This sequence belongs to the bacterial ribosomal protein bL34 family.

The protein resides in the plastid. It is found in the chloroplast. This Gracilaria tenuistipitata var. liui (Red alga) protein is Large ribosomal subunit protein bL34c.